The sequence spans 192 residues: uncharacterized protein (192 aa).

The Nudix hydrolase domain occupies 29 to 160 (HRQAAVLIPI…PLDIYRRGDS (132 aa)). The Nudix box motif lies at 67-89 (GAVDDTDASVIAAALREAEEEVA). Residues E83 and E87 each contribute to the Mg(2+) site.

This sequence belongs to the Nudix hydrolase family. PCD1 subfamily. It depends on Mn(2+) as a cofactor. The cofactor is Mg(2+).

Probably mediates the hydrolysis of some nucleoside diphosphate derivatives. This is an uncharacterized protein from Shigella flexneri serotype 5b (strain 8401).